Here is an 89-residue protein sequence, read N- to C-terminus: Large ribosomal subunit protein bL27 (89 aa).

Positions 1–23 (MAHKKAGGSSRNGRDSAGKRLGI) are disordered.

Belongs to the bacterial ribosomal protein bL27 family.

This is Large ribosomal subunit protein bL27 from Rhodopseudomonas palustris (strain BisA53).